A 273-amino-acid chain; its full sequence is MRIKPYFESDDKNFNIYQGNCIDFMSHFQDNSIDMIFADPPYFLSNDGLTFKNSIIQSVNKGEWDKNDNEASIYNFNHEWIAQARQLLKDNGTIWISGTHHNIFTVGQVLKENNFKILNIITWEKPNPPPNFSCRYFTYSSEWIIWARKHSKIPHYFNYDLMKKLNGDKQQKDIWRLPAVGSWEKTQGKHPTQKPLGLLSRIILSSTQKDDLILDPFSGSGTTGIAGVLLDRNYIGIEQELEFLELSKRRYHEITPVLKNEFKQKIRKQISAI.

This sequence belongs to the N(4)/N(6)-methyltransferase family.

It carries out the reaction a 2'-deoxyadenosine in DNA + S-adenosyl-L-methionine = an N(6)-methyl-2'-deoxyadenosine in DNA + S-adenosyl-L-homocysteine + H(+). A beta subtype methylase that recognizes the double-stranded sequence 5'-GATC-3', methylates A-2 on both strands, and protects the DNA from cleavage by the MboI endonuclease. This seems to be a weaker methylase than M1.MboI. This Moraxella bovis protein is Type II methyltransferase M2.MboI (mboIBM).